The primary structure comprises 385 residues: MAIKHLFTSESVSEGHPDKIADQISDAVLDAIFEQDPKARVACETYVKTGMVMVGGEITTSAWVDIEEITRQTVREIGYVHSDMGFDANSCAVLNTIGKQSPDINQGVDKADPKEQGAGDQGIMFGYATNETEVLMPAPITYAHRLMQRQAEVRKNGTLPWLRPDAKSQVTFQYDQGKIVGIDAVVLSTQHSDSISTADLREAVMEEIIKPVLPAEWLSKETKYFINPTGRFVIGGPMGDCGLTGRKIIVDTYGGAARHGGGAFSGKDPSKVDRSAAYAARYVAKNIVAAGMADRCEIQLSYAIGVADPTSIMVETFGTEKVSQEIIIEAVRQFFDLRPYGLQEMLNLLQPIYKKTAAYGHFGREEFPWEATDKAALLRDFAGLK.

An ATP-binding site is contributed by His16. Asp18 lines the Mg(2+) pocket. Residue Glu44 participates in K(+) binding. L-methionine is bound by residues Glu57 and Gln100. The tract at residues 100-110 (QSPDINQGVDK) is flexible loop. ATP contacts are provided by residues 165 to 167 (DAK), 231 to 232 (RF), Asp240, 246 to 247 (RK), Ala263, and Lys267. Asp240 provides a ligand contact to L-methionine. Residue Lys271 coordinates L-methionine.

The protein belongs to the AdoMet synthase family. As to quaternary structure, homotetramer; dimer of dimers. Mg(2+) serves as cofactor. K(+) is required as a cofactor.

It localises to the cytoplasm. The catalysed reaction is L-methionine + ATP + H2O = S-adenosyl-L-methionine + phosphate + diphosphate. Its pathway is amino-acid biosynthesis; S-adenosyl-L-methionine biosynthesis; S-adenosyl-L-methionine from L-methionine: step 1/1. Functionally, catalyzes the formation of S-adenosylmethionine (AdoMet) from methionine and ATP. The overall synthetic reaction is composed of two sequential steps, AdoMet formation and the subsequent tripolyphosphate hydrolysis which occurs prior to release of AdoMet from the enzyme. The polypeptide is S-adenosylmethionine synthase (Vibrio cholerae serotype O1 (strain ATCC 39541 / Classical Ogawa 395 / O395)).